The following is a 116-amino-acid chain: Large ribosomal subunit protein uL24c (116 aa).

It belongs to the universal ribosomal protein uL24 family. Part of the 50S ribosomal subunit.

It localises to the plastid. Its subcellular location is the chloroplast. Its function is as follows. One of two assembly initiator proteins, it binds directly to the 5'-end of the 23S rRNA, where it nucleates assembly of the 50S subunit. This Pyropia yezoensis (Susabi-nori) protein is Large ribosomal subunit protein uL24c (rpl24).